We begin with the raw amino-acid sequence, 533 residues long: D-3-phosphoglycerate dehydrogenase (533 aa).

A2 carries the post-translational modification N-acetylalanine. S14 carries the phosphoserine modification. K21 is modified (N6-acetyllysine; alternate). Residue K21 forms a Glycyl lysine isopeptide (Lys-Gly) (interchain with G-Cter in SUMO1); alternate linkage. K21 is covalently cross-linked (Glycyl lysine isopeptide (Lys-Gly) (interchain with G-Cter in SUMO2); alternate). The residue at position 58 (K58) is an N6-acetyllysine. Residues T78, 155–156, D175, T207, 234–236, and D260 each bind NAD(+); these read RI and CAR. T78 carries the phosphothreonine modification. Residue R236 is part of the active site. E265 is an active-site residue. H283 acts as the Proton donor in catalysis. Residue 283-286 coordinates NAD(+); it reads HLGA.

The protein belongs to the D-isomer specific 2-hydroxyacid dehydrogenase family. Homotetramer. Liver, kidney, brain, testis.

It carries out the reaction (2R)-3-phosphoglycerate + NAD(+) = 3-phosphooxypyruvate + NADH + H(+). Its pathway is amino-acid biosynthesis; L-serine biosynthesis; L-serine from 3-phospho-D-glycerate: step 1/3. Functionally, catalyzes the reversible oxidation of 3-phospho-D-glycerate to 3-phosphonooxypyruvate, the first step of the phosphorylated L-serine biosynthesis pathway. Does not catalyze the reversible oxidation of 2-hydroxyglutarate to 2-oxoglutarate and the reversible oxidation of (S)-malate to oxaloacetate. The protein is D-3-phosphoglycerate dehydrogenase (Phgdh) of Rattus norvegicus (Rat).